The following is a 139-amino-acid chain: Putative translationally-controlled tumor protein-like protein TPT1P8 (139 aa).

The TCTP domain maps to 1–139 (MIIFQDLISH…KTTSSLLVKT (139 aa)). Residues 40-51 (TGNTDDSLIGRN) are compositionally biased toward polar residues. The disordered stretch occupies residues 40-60 (TGNTDDSLIGRNSSSESTEDE).

Belongs to the TCTP family.

This is Putative translationally-controlled tumor protein-like protein TPT1P8 (TPT1P8) from Homo sapiens (Human).